A 352-amino-acid chain; its full sequence is Inhibin beta C chain (352 aa).

The first 18 residues, Met-1–Ala-18, serve as a signal peptide directing secretion. A propeptide spanning residues Thr-19–Arg-236 is cleaved from the precursor. Residues Asn-110, Asn-143, and Asn-161 are each glycosylated (N-linked (GlcNAc...) asparagine). 4 disulfide bridges follow: Cys-240-Cys-248, Cys-247-Cys-317, Cys-276-Cys-349, and Cys-280-Cys-351.

The protein belongs to the TGF-beta family. Homodimeric or heterodimeric through association with alpha and beta subunits, linked by one or more disulfide bonds. Inhibins are heterodimers of one alpha and one beta subunit. Activins are homo- or heterodimers of beta subunits only. As to expression, expressed in benign prostatic hyperplasia.

It localises to the secreted. Its function is as follows. Inhibins and activins inhibit and activate, respectively, the secretion of follitropin by the pituitary gland. Inhibins/activins are involved in regulating a number of diverse functions such as hypothalamic and pituitary hormone secretion, gonadal hormone secretion, germ cell development and maturation, erythroid differentiation, insulin secretion, nerve cell survival, embryonic axial development or bone growth, depending on their subunit composition. Inhibins appear to oppose the functions of activins. This is Inhibin beta C chain (INHBC) from Homo sapiens (Human).